A 255-amino-acid chain; its full sequence is Sulfur carrier protein FdhD (255 aa).

The Cysteine persulfide intermediate role is filled by C103.

Belongs to the FdhD family.

The protein localises to the cytoplasm. Required for formate dehydrogenase (FDH) activity. Acts as a sulfur carrier protein that transfers sulfur from IscS to the molybdenum cofactor prior to its insertion into FDH. This chain is Sulfur carrier protein FdhD, found in Sulfurisphaera tokodaii (strain DSM 16993 / JCM 10545 / NBRC 100140 / 7) (Sulfolobus tokodaii).